A 193-amino-acid polypeptide reads, in one-letter code: Oleosin S1-2 (193 aa).

At alanine 2 the chain carries N-acetylalanine. A polar region spans residues 2–39 (ADVRTHAHQVQVHPLRQHEGGIKVVYPQSGPSSTQVLA). 3 helical membrane passes run 37 to 57 (VLAVVAGVPVGGTLLTLAGLT), 66 to 86 (ILAFPLFLIFSPVIVPAAFVI), and 87 to 107 (GLAMTGFMASGAIGLTGLSSM). The hydrophobic stretch occupies residues 40-113 (VVAGVPVGGT…LSSMSWVLNH (74 aa)). The tract at residues 139–193 (AGQRTKDAGQTIEDKAHDVRESKTYDVRDRDTKGHTASGGDRDTKTTREVRVATT) is disordered. A compositionally biased stretch (basic and acidic residues) spans 142-193 (RTKDAGQTIEDKAHDVRESKTYDVRDRDTKGHTASGGDRDTKTTREVRVATT).

This sequence belongs to the oleosin family.

It is found in the lipid droplet. It localises to the membrane. In terms of biological role, may have a structural role to stabilize the lipid body during desiccation of the seed by preventing coalescence of the oil. Probably interacts with both lipid and phospholipid moieties of lipid bodies. May also provide recognition signals for specific lipase anchorage in lipolysis during seedling growth. This Brassica napus (Rape) protein is Oleosin S1-2 (S1).